Consider the following 317-residue polypeptide: Glycine--tRNA ligase alpha subunit (317 aa).

This sequence belongs to the class-II aminoacyl-tRNA synthetase family. In terms of assembly, tetramer of two alpha and two beta subunits.

It localises to the cytoplasm. The catalysed reaction is tRNA(Gly) + glycine + ATP = glycyl-tRNA(Gly) + AMP + diphosphate. The chain is Glycine--tRNA ligase alpha subunit from Pseudomonas fluorescens (strain ATCC BAA-477 / NRRL B-23932 / Pf-5).